Reading from the N-terminus, the 186-residue chain is Apolipophorin-3 (186 aa).

The signal sequence occupies residues 1-18; sequence MAAKYVFVVAACSALAQA. A propeptide spanning residues 19-23 is cleaved from the precursor; the sequence is GIVRR.

This sequence belongs to the insect apolipophorin-3 family. As to quaternary structure, equilibrium between a soluble monomer and a bound lipoprotein form. Apolipophorin-3 associates with lipophorin during lipid loading until each particle contains 9 or 14 molecules of apolipophorin-3. As to expression, expressed in hemolymph. Also found in hemocytes and fat body.

It localises to the secreted. Assists in the loading of diacylglycerol, generated from triacylglycerol stores in the fat body through the action of adipokinetic hormone, into lipophorin, the hemolymph lipoprotein. It increases the lipid carrying capacity of lipophorin by covering the expanding hydrophobic surface resulting from diacylglycerol uptake. It thus plays a critical role in the transport of lipids during flight in several species of insects. Has antibacterial activity against the Gram-positive bacteria L.monocytogenes (MIC=6.5 uM). Lacks antibacterial activity against the Gram-positive bacteria B.circulans, M.luteus, S.aureus, and S.lutea, and the Gram-negative bacteria E.coli D31, E.coli ATCC 25922, and S.typhimurium. Lacks antifungal activity against S.cerevisiae, P.pastoris, Z.marxianus, C.albicans, C.wickerhamii, A.niger, F.oxysporum, and T.harizianum. This is Apolipophorin-3 from Galleria mellonella (Greater wax moth).